A 300-amino-acid polypeptide reads, in one-letter code: Ribosomal protein L11 methyltransferase (300 aa).

Positions 152, 173, 195, and 234 each coordinate S-adenosyl-L-methionine.

This sequence belongs to the methyltransferase superfamily. PrmA family.

It localises to the cytoplasm. It carries out the reaction L-lysyl-[protein] + 3 S-adenosyl-L-methionine = N(6),N(6),N(6)-trimethyl-L-lysyl-[protein] + 3 S-adenosyl-L-homocysteine + 3 H(+). Methylates ribosomal protein L11. The chain is Ribosomal protein L11 methyltransferase from Burkholderia cenocepacia (strain HI2424).